Reading from the N-terminus, the 492-residue chain is Katanin p60 ATPase-containing subunit A1 (492 aa).

The disordered stretch occupies residues serine 80–threonine 186. Positions proline 145–serine 171 are enriched in basic and acidic residues. Glycine 250 to threonine 257 serves as a coordination point for ATP.

Belongs to the AAA ATPase family. Katanin p60 subunit A1 subfamily. As to quaternary structure, can homooligomerize into hexameric rings, which may be promoted by interaction with microtubules. Interacts with KATNB1, which may serve as a targeting subunit.

The protein localises to the cytoplasm. The protein resides in the cytoskeleton. Its subcellular location is the microtubule organizing center. It localises to the centrosome. It is found in the spindle pole. The protein localises to the spindle. The catalysed reaction is n ATP + n H2O + a microtubule = n ADP + n phosphate + (n+1) alpha/beta tubulin heterodimers.. ATPase activity is stimulated by microtubules, which promote homooligomerization. ATP-dependent microtubule severing is stimulated by interaction with KATNB1. In terms of biological role, catalytic subunit of a complex which severs microtubules in an ATP-dependent manner. Microtubule severing may promote rapid reorganization of cellular microtubule arrays and the release of microtubules from the centrosome following nucleation. In Gallus gallus (Chicken), this protein is Katanin p60 ATPase-containing subunit A1.